The sequence spans 292 residues: Troponin I (292 aa).

At Ser-1 the chain carries N-acetylserine. The tract at residues 1 to 149 (SSLEERRAAR…GLGGLSPEKK (149 aa)) is disordered. A compositionally biased stretch (low complexity) spans 46-55 (YSAPAEPAYD). Residues 58–134 (AENRRRQQQE…EARRMAEEQK (77 aa)) are compositionally biased toward basic and acidic residues. The interval 237–250 (DTKGKFVKPVLRKV) is actin-binding. The tract at residues 255-292 (SKLDKIQRKEAKKSDFRDNLKSSREHEADKEGGEGENE) is disordered.

This sequence belongs to the troponin I family.

Functionally, troponin I is the inhibitory subunit of troponin, the thin filament regulatory complex which confers calcium-sensitivity to striated muscle actomyosin ATPase activity. In Chlamys nipponensis akazara (Akazara scallop), this protein is Troponin I.